The following is a 512-amino-acid chain: ETS translocation variant 3 (512 aa).

Residues 35–116 constitute a DNA-binding region (ETS); that stretch reads IQLWHFILEL…KGKRFTYKFN (82 aa). Positions 136-222 are disordered; that stretch reads VPQSAPPVPT…NAIGGGGIGH (87 aa). A phosphoserine mark is found at Ser-139, Ser-159, and Ser-315. Residues 158–184 show a composition bias toward polar residues; the sequence is HSPTNDVQPGRFSASSLTASGQESSNG. A disordered region spans residues 336–512; that stretch reads PEESTQFSIK…QGLATAAADA (177 aa). Residues 380 to 406 show a composition bias toward basic and acidic residues; that stretch reads IKVEPASEKDPESLRQSAREKEEHTQE. Lys-381 participates in a covalent cross-link: Glycyl lysine isopeptide (Lys-Gly) (interchain with G-Cter in SUMO2). The residue at position 388 (Lys-388) is an N6-acetyllysine; alternate. A Glycyl lysine isopeptide (Lys-Gly) (interchain with G-Cter in SUMO2); alternate cross-link involves residue Lys-388. Acidic residues predominate over residues 443 to 452; it reads EPLEVTEDIE. Basic and acidic residues-rich tracts occupy residues 453-468 and 479-491; these read DRPGKEPSAPEKKEDA and RWNDDPEARELSK.

Belongs to the ETS family.

The protein localises to the nucleus. In terms of biological role, transcriptional repressor that contribute to growth arrest during terminal macrophage differentiation by repressing target genes involved in Ras-dependent proliferation. Represses MMP1 promoter activity. The chain is ETS translocation variant 3 (ETV3) from Pan paniscus (Pygmy chimpanzee).